Reading from the N-terminus, the 602-residue chain is Elongation factor 4 (602 aa).

A tr-type G domain is found at 7–189; sequence KYIRNFSIVA…AIVNKVPAPD (183 aa). Residues 19-24 and 136-139 contribute to the GTP site; these read DHGKST and NKID.

Belongs to the TRAFAC class translation factor GTPase superfamily. Classic translation factor GTPase family. LepA subfamily.

The protein resides in the cell membrane. It catalyses the reaction GTP + H2O = GDP + phosphate + H(+). In terms of biological role, required for accurate and efficient protein synthesis under certain stress conditions. May act as a fidelity factor of the translation reaction, by catalyzing a one-codon backward translocation of tRNAs on improperly translocated ribosomes. Back-translocation proceeds from a post-translocation (POST) complex to a pre-translocation (PRE) complex, thus giving elongation factor G a second chance to translocate the tRNAs correctly. Binds to ribosomes in a GTP-dependent manner. The sequence is that of Elongation factor 4 from Clostridium botulinum (strain Kyoto / Type A2).